The sequence spans 502 residues: ATP synthase subunit alpha (502 aa).

169-176 is an ATP binding site; sequence GDRQTGKT.

It belongs to the ATPase alpha/beta chains family. As to quaternary structure, F-type ATPases have 2 components, CF(1) - the catalytic core - and CF(0) - the membrane proton channel. CF(1) has five subunits: alpha(3), beta(3), gamma(1), delta(1), epsilon(1). CF(0) has three main subunits: a(1), b(2) and c(9-12). The alpha and beta chains form an alternating ring which encloses part of the gamma chain. CF(1) is attached to CF(0) by a central stalk formed by the gamma and epsilon chains, while a peripheral stalk is formed by the delta and b chains.

Its subcellular location is the cell membrane. It carries out the reaction ATP + H2O + 4 H(+)(in) = ADP + phosphate + 5 H(+)(out). Its function is as follows. Produces ATP from ADP in the presence of a proton gradient across the membrane. The alpha chain is a regulatory subunit. The sequence is that of ATP synthase subunit alpha from Exiguobacterium sp. (strain ATCC BAA-1283 / AT1b).